The primary structure comprises 917 residues: Phosphoenolpyruvate carboxylase (917 aa).

Active-site residues include H145 and K578.

This sequence belongs to the PEPCase type 1 family. Mg(2+) is required as a cofactor.

It catalyses the reaction oxaloacetate + phosphate = phosphoenolpyruvate + hydrogencarbonate. Forms oxaloacetate, a four-carbon dicarboxylic acid source for the tricarboxylic acid cycle. This is Phosphoenolpyruvate carboxylase from Azoarcus sp. (strain BH72).